The sequence spans 255 residues: Sulfur carrier protein FdhD (255 aa).

C103 serves as the catalytic Cysteine persulfide intermediate.

It belongs to the FdhD family.

The protein localises to the cytoplasm. In terms of biological role, required for formate dehydrogenase (FDH) activity. Acts as a sulfur carrier protein that transfers sulfur from IscS to the molybdenum cofactor prior to its insertion into FDH. This Sulfurisphaera tokodaii (strain DSM 16993 / JCM 10545 / NBRC 100140 / 7) (Sulfolobus tokodaii) protein is Sulfur carrier protein FdhD.